Reading from the N-terminus, the 429-residue chain is Glutamate-1-semialdehyde 2,1-aminomutase 2 (429 aa).

K268 is modified (N6-(pyridoxal phosphate)lysine).

It belongs to the class-III pyridoxal-phosphate-dependent aminotransferase family. HemL subfamily. Homodimer. Requires pyridoxal 5'-phosphate as cofactor.

It is found in the cytoplasm. It catalyses the reaction (S)-4-amino-5-oxopentanoate = 5-aminolevulinate. It functions in the pathway porphyrin-containing compound metabolism; protoporphyrin-IX biosynthesis; 5-aminolevulinate from L-glutamyl-tRNA(Glu): step 2/2. This Bacillus cereus (strain B4264) protein is Glutamate-1-semialdehyde 2,1-aminomutase 2.